Consider the following 864-residue polypeptide: Sine oculis-binding protein homolog (864 aa).

Residues 1–14 (MAEMEKEGRPPENK) show a composition bias toward basic and acidic residues. The segment at 1–25 (MAEMEKEGRPPENKRSRKPAHPVKR) is disordered. 2 consecutive FCS-type zinc fingers follow at residues 142 to 180 (DEVS…KCFA) and 216 to 256 (FKNN…KCLN). Disordered stretches follow at residues 304 to 360 (LTDA…ETPS), 413 to 484 (RGPP…PGAP), and 550 to 616 (KPPN…RGRG). 2 stretches are compositionally biased toward low complexity: residues 314–335 (PVAA…VSPS) and 417–433 (HHAS…MLPG). Residues 460–484 (IHPPSTPTMPGNPPGLLPPPPPGAP) show a composition bias toward pro residues. Composition is skewed to low complexity over residues 565 to 582 (SAPG…GRSL) and 590 to 603 (GSSK…GSSG). Positions 618–622 (VVDLT) match the SUMO interaction motif 1 (SIM); mediates the binding to polysumoylated substrates motif. Ser627 carries the phosphoserine modification. The SUMO interaction motif 2 (SIM); mediates the binding to polysumoylated substrates signature appears at 648–652 (VIDLT). Residue Lys672 forms a Glycyl lysine isopeptide (Lys-Gly) (interchain with G-Cter in SUMO2) linkage. Ser694 is modified (phosphoserine). Residues 725 to 750 (APAEAKGAEPPPEQPPPPAPPKKLLS) form a disordered region. Positions 733-745 (EPPPEQPPPPAPP) are enriched in pro residues.

Belongs to the SOBP family. As to quaternary structure, interacts (via SIM domains) with SUMO1 and SUMO2.

Functionally, implicated in development of the cochlea. In Rattus norvegicus (Rat), this protein is Sine oculis-binding protein homolog.